The primary structure comprises 206 residues: MAANKNKNQSSLALHKVIMVGSGGVGKSALTLQFMYDEFVEDYEPTKADSYRKKVVLDGEEVQIDILDTAGQEDYAAIRDNYFRSGEGFLCVFSITEQESFTATVEFREQILRVKAEEDKIPLLLVGNKSDLEDRRQVSIEEARSKAEEWGVQYVETSAKTRANVDKVFFDLMREVRAKKMSENKDKNGKKSSRNKKSLRERCCIL.

Position 21 to 28 (21 to 28) interacts with GTP; that stretch reads GSGGVGKS. Residues 43 to 51 carry the Effector region motif; that stretch reads YEPTKADSY. GTP is bound by residues 68–72 and 128–131; these read DTAGQ and NKSD. A compositionally biased stretch (basic and acidic residues) spans 180–189; sequence KMSENKDKNG. Residues 180 to 206 form a disordered region; sequence KMSENKDKNGKKSSRNKKSLRERCCIL. Position 203 is a cysteine methyl ester (cysteine 203). Cysteine 203 carries the S-geranylgeranyl cysteine lipid modification. Positions 204 to 206 are cleaved as a propeptide — removed in mature form; sequence CIL.

The protein belongs to the small GTPase superfamily. Ras family.

The protein resides in the cell membrane. It carries out the reaction GTP + H2O = GDP + phosphate + H(+). The sequence is that of Ras-related protein O-RAL from Diplobatis ommata (Ocellated electric ray).